The chain runs to 422 residues: UDP-N-acetylglucosamine 1-carboxyvinyltransferase (422 aa).

22–23 (KN) contributes to the phosphoenolpyruvate binding site. Arg-93 serves as a coordination point for UDP-N-acetyl-alpha-D-glucosamine. Cys-117 functions as the Proton donor in the catalytic mechanism. Cys-117 bears the 2-(S-cysteinyl)pyruvic acid O-phosphothioketal mark. UDP-N-acetyl-alpha-D-glucosamine contacts are provided by residues 122-126 (RPVDQ), Asp-305, and Ile-327.

The protein belongs to the EPSP synthase family. MurA subfamily.

The protein resides in the cytoplasm. It carries out the reaction phosphoenolpyruvate + UDP-N-acetyl-alpha-D-glucosamine = UDP-N-acetyl-3-O-(1-carboxyvinyl)-alpha-D-glucosamine + phosphate. Its pathway is cell wall biogenesis; peptidoglycan biosynthesis. Cell wall formation. Adds enolpyruvyl to UDP-N-acetylglucosamine. The polypeptide is UDP-N-acetylglucosamine 1-carboxyvinyltransferase (Bordetella petrii (strain ATCC BAA-461 / DSM 12804 / CCUG 43448)).